Reading from the N-terminus, the 217-residue chain is Imidazole glycerol phosphate synthase subunit HisH (217 aa).

The 212-residue stretch at 1–212 folds into the Glutamine amidotransferase type-1 domain; it reads MLAILDYKAG…YEYCRQSRQE (212 aa). The active-site Nucleophile is Cys-79. Residues His-187 and Glu-189 contribute to the active site.

As to quaternary structure, heterodimer of HisH and HisF.

The protein localises to the cytoplasm. It catalyses the reaction 5-[(5-phospho-1-deoxy-D-ribulos-1-ylimino)methylamino]-1-(5-phospho-beta-D-ribosyl)imidazole-4-carboxamide + L-glutamine = D-erythro-1-(imidazol-4-yl)glycerol 3-phosphate + 5-amino-1-(5-phospho-beta-D-ribosyl)imidazole-4-carboxamide + L-glutamate + H(+). The catalysed reaction is L-glutamine + H2O = L-glutamate + NH4(+). It participates in amino-acid biosynthesis; L-histidine biosynthesis; L-histidine from 5-phospho-alpha-D-ribose 1-diphosphate: step 5/9. Functionally, IGPS catalyzes the conversion of PRFAR and glutamine to IGP, AICAR and glutamate. The HisH subunit catalyzes the hydrolysis of glutamine to glutamate and ammonia as part of the synthesis of IGP and AICAR. The resulting ammonia molecule is channeled to the active site of HisF. This is Imidazole glycerol phosphate synthase subunit HisH from Desulfovibrio desulfuricans (strain ATCC 27774 / DSM 6949 / MB).